The primary structure comprises 324 residues: tRNA U34 carboxymethyltransferase (324 aa).

Residues lysine 91, tryptophan 105, lysine 110, glycine 130, 152–154 (DPS), 181–182 (IE), methionine 196, tyrosine 200, and arginine 315 each bind carboxy-S-adenosyl-L-methionine.

Belongs to the class I-like SAM-binding methyltransferase superfamily. CmoB family. As to quaternary structure, homotetramer.

The enzyme catalyses carboxy-S-adenosyl-L-methionine + 5-hydroxyuridine(34) in tRNA = 5-carboxymethoxyuridine(34) in tRNA + S-adenosyl-L-homocysteine + H(+). Its function is as follows. Catalyzes carboxymethyl transfer from carboxy-S-adenosyl-L-methionine (Cx-SAM) to 5-hydroxyuridine (ho5U) to form 5-carboxymethoxyuridine (cmo5U) at position 34 in tRNAs. The polypeptide is tRNA U34 carboxymethyltransferase (Aliivibrio salmonicida (strain LFI1238) (Vibrio salmonicida (strain LFI1238))).